Here is a 96-residue protein sequence, read N- to C-terminus: Large ribosomal subunit protein bL21 (96 aa).

This sequence belongs to the bacterial ribosomal protein bL21 family. As to quaternary structure, part of the 50S ribosomal subunit. Contacts protein L20.

Functionally, this protein binds to 23S rRNA in the presence of protein L20. This is Large ribosomal subunit protein bL21 from Prosthecochloris aestuarii (strain DSM 271 / SK 413).